A 1235-amino-acid polypeptide reads, in one-letter code: DNA polymerase catalytic subunit (1235 aa).

Disordered regions lie at residues 640–693 and 1098–1134; these read QGRF…AGRH and AAAPGDEPAPPAALPSPAKRPRETPSHADPPGGASKP. Positions 650-661 are enriched in basic and acidic residues; that stretch reads APKRPAAAREDE. Acidic residues predominate over residues 662–675; the sequence is ERPEEEGEDEDERE. The segment covering 676–691 has biased composition (basic and acidic residues); that stretch reads EGGGEREPEGARETAG.

This sequence belongs to the DNA polymerase type-B family. In terms of assembly, forms a complex with the ssDNA-binding protein UL29, the DNA polymerase processivity factor, and the alkaline exonuclease. Interacts with the putative helicase-primase complex subunit UL8; this interaction may coordinate leading and lagging strand DNA synthesis at the replication fork.

The protein localises to the host nucleus. It carries out the reaction DNA(n) + a 2'-deoxyribonucleoside 5'-triphosphate = DNA(n+1) + diphosphate. The enzyme catalyses Endonucleolytic cleavage to 5'-phosphomonoester.. Replicates viral genomic DNA. The replication complex is composed of six viral proteins: the DNA polymerase, processivity factor, primase, primase-associated factor, helicase, and ssDNA-binding protein. Additionally, the polymerase contains an intrinsic ribonuclease H (RNase H) activity that specifically degrades RNA/DNA heteroduplexes or duplex DNA substrates in the 5' to 3' direction. Therefore, it can catalyze the excision of the RNA primers that initiate the synthesis of Okazaki fragments at a replication fork during viral DNA replication. The polypeptide is DNA polymerase catalytic subunit (Human herpesvirus 1 (strain KOS) (HHV-1)).